Reading from the N-terminus, the 211-residue chain is Small ribosomal subunit protein eS8 (211 aa).

It belongs to the eukaryotic ribosomal protein eS8 family.

The sequence is that of Small ribosomal subunit protein eS8 (rps8) from Dictyostelium discoideum (Social amoeba).